Reading from the N-terminus, the 129-residue chain is uncharacterized protein (129 aa).

Helical transmembrane passes span phenylalanine 4–isoleucine 24 and valine 37–isoleucine 57.

This sequence to B.burgdorferi BBF20.

Its subcellular location is the cell membrane. This is an uncharacterized protein from Borreliella burgdorferi (strain ATCC 35210 / DSM 4680 / CIP 102532 / B31) (Borrelia burgdorferi).